Here is a 323-residue protein sequence, read N- to C-terminus: Elongation factor P--(R)-beta-lysine ligase (323 aa).

Residue 76 to 78 coordinates substrate; that stretch reads SPE. ATP contacts are provided by residues 100 to 102 and asparagine 109; that span reads RNE. Residue tyrosine 118 coordinates substrate. 242–243 contributes to the ATP binding site; it reads EL. A substrate-binding site is contributed by glutamate 249. Residue glycine 298 participates in ATP binding.

The protein belongs to the class-II aminoacyl-tRNA synthetase family. EpmA subfamily. In terms of assembly, homodimer.

The enzyme catalyses D-beta-lysine + L-lysyl-[protein] + ATP = N(6)-((3R)-3,6-diaminohexanoyl)-L-lysyl-[protein] + AMP + diphosphate + H(+). Its function is as follows. With EpmB is involved in the beta-lysylation step of the post-translational modification of translation elongation factor P (EF-P). Catalyzes the ATP-dependent activation of (R)-beta-lysine produced by EpmB, forming a lysyl-adenylate, from which the beta-lysyl moiety is then transferred to the epsilon-amino group of a conserved specific lysine residue in EF-P. The polypeptide is Elongation factor P--(R)-beta-lysine ligase (Haemophilus influenzae (strain PittGG)).